A 143-amino-acid chain; its full sequence is Ribulose bisphosphate carboxylase large chain (143 aa).

Positions 1 to 2 (MS) are excised as a propeptide. Residue Pro-3 is modified to N-acetylproline. Residue Lys-14 is modified to N6,N6,N6-trimethyllysine. Substrate is bound at residue Xaa-123.

It belongs to the RuBisCO large chain family. Type I subfamily. Heterohexadecamer of 8 large chains and 8 small chains.

The protein localises to the plastid. The protein resides in the chloroplast. The catalysed reaction is 2 (2R)-3-phosphoglycerate + 2 H(+) = D-ribulose 1,5-bisphosphate + CO2 + H2O. The enzyme catalyses D-ribulose 1,5-bisphosphate + O2 = 2-phosphoglycolate + (2R)-3-phosphoglycerate + 2 H(+). Functionally, ruBisCO catalyzes two reactions: the carboxylation of D-ribulose 1,5-bisphosphate, the primary event in carbon dioxide fixation, as well as the oxidative fragmentation of the pentose substrate in the photorespiration process. Both reactions occur simultaneously and in competition at the same active site. This is Ribulose bisphosphate carboxylase large chain (rbcL) from Nemopanthus mucronatus (Catberry).